The following is a 693-amino-acid chain: CREB-regulated transcription coactivator 2 (693 aa).

Positions 1–20 are enriched in polar residues; it reads MATSGANGPGSATASASNPR. Residues 1 to 30 are disordered; that stretch reads MATSGANGPGSATASASNPRKFSEKIALQK. Alanine 2 is subject to N-acetylalanine. Arginine 51 is modified (asymmetric dimethylarginine; by PRMT6). Phosphoserine is present on residues serine 70, serine 86, and serine 90. 3 positions are modified to asymmetric dimethylarginine; by PRMT6: arginine 99, arginine 120, and arginine 123. Phosphoserine is present on serine 136. Asymmetric dimethylarginine; by PRMT6 occurs at positions 161 and 168. Threonine 169 is subject to Phosphothreonine. At serine 171 the chain carries Phosphoserine; by AMPK, MARK2, SIK1 and SIK2. The residue at position 192 (threonine 192) is a Phosphothreonine. Lysine 234 is covalently cross-linked (Glycyl lysine isopeptide (Lys-Gly) (interchain with G-Cter in SUMO2)). Residues 271-287 carry the Nuclear export signal motif; the sequence is TGGSLPDLTNLHFPPPL. Serine 274 is subject to Phosphoserine; by MARK2. Disordered regions lie at residues 282–306 and 328–554; these read HFPP…GGNS and GYDA…MSDF. A phosphoserine mark is found at serine 306, serine 368, serine 393, serine 433, and serine 456. 2 stretches are compositionally biased toward low complexity: residues 331–378 and 386–415; these read APGL…SSLA and SLGH…GAPS. The span at 447-468 shows a compositional bias: polar residues; that stretch reads SQQQLPKQFSPTMSPTLSSITQ. A Phosphotyrosine modification is found at tyrosine 488. Serine 489, serine 490, and serine 492 each carry phosphoserine. A compositionally biased stretch (polar residues) spans 498 to 507; it reads QPHTPKSLQQ. At threonine 501 the chain carries Phosphothreonine. The span at 509–529 shows a compositional bias: low complexity; that stretch reads GLPSQSCSVQSSGGQPPGRQS. Residues serine 613, serine 623, and serine 624 each carry the phosphoserine modification.

Belongs to the TORC family. Binds, as a tetramer, through its N-terminal region, with the bZIP domain of CREB1. 'Arg-314' in the bZIP domain of CREB1 is essential for this interaction. Interaction, via its C-terminal, with TAF4, enhances recruitment of TAF4 to CREB1. Interacts with SIK2. Interacts with 14-3-3 proteins, YWHAB and YWHAG. Interacts (probably when phosphorylated at Ser-171) with YWHAE. Interacts with calmodulin-dependent catalytic subunit PPP3CA/calcineurin A. Interaction with COP1 mediates nuclear export and degradation of CRTC2. As to quaternary structure, (Microbial infection) Interaction with the human T-cell leukemia virus type 1 (HTLV-1) Tax protein is essential for optimal transcription activation by Tax. Phosphorylation/dephosphorylation states of Ser-171 are required for regulating transduction of CREB activity. CRTCs/TORCs are inactive when phosphorylated, and active when dephosphorylated at this site. This primary site of phosphorylation, is regulated by cAMP and calcium levels and is dependent on the phosphorylation of SIKs (SIK1 and SIK2) by LKB1. Following adenylyl cyclase activation, dephosphorylated at Ser-171 by PPP3CA/calcineurin A resulting in CRTC2 dissociation from 14-3-3 proteins and PPP3CA. Both insulin and AMPK increase this phosphorylation of CRTC2 while glucagon suppresses it. Phosphorylation at Ser-274 by MARK2 is induced under low glucose conditions and dephosphorylated in response to glucose influx. Phosphorylation at Ser-274 promotes interaction with 14-3-3 proteins and translocation to the cytoplasm. In terms of processing, asymmetric dimethylation of arginine resisues by PRMT6 enhances the association of CRTC2 with CREB on the promoters of gluconeogenic genes. Most abundantly expressed in the thymus. Present in both B and T-lymphocytes. Highly expressed in HEK293T cells and in insulinomas. High levels also in spleen, ovary, muscle and lung, with highest levels in muscle. Lower levels found in brain, colon, heart, kidney, prostate, small intestine and stomach. Weak expression in liver and pancreas.

It localises to the cytoplasm. Its subcellular location is the nucleus. Transcriptional coactivator for CREB1 which activates transcription through both consensus and variant cAMP response element (CRE) sites. Acts as a coactivator, in the SIK/TORC signaling pathway, being active when dephosphorylated and acts independently of CREB1 'Ser-133' phosphorylation. Enhances the interaction of CREB1 with TAF4. Regulates gluconeogenesis as a component of the LKB1/AMPK/TORC2 signaling pathway. Regulates the expression of specific genes such as the steroidogenic gene, StAR. Potent coactivator of PPARGC1A and inducer of mitochondrial biogenesis in muscle cells. Also coactivator for TAX activation of the human T-cell leukemia virus type 1 (HTLV-1) long terminal repeats (LTR). The chain is CREB-regulated transcription coactivator 2 (CRTC2) from Homo sapiens (Human).